The primary structure comprises 439 residues: Niacin transporter NiaP (439 aa).

12 helical membrane-spanning segments follow: residues 20–40 (LWVV…IAFI), 57–77 (WIVS…GGLA), 84–104 (TVFA…AFAP), 108–128 (WLLA…PVAV), 143–163 (FIVL…LVSY), 169–189 (FGWH…YVII), 253–273 (LMLW…FTWL), 288–308 (FEYV…AAWL), 316–336 (ATLA…GQAD), 338–358 (VFNI…AWGV), 374–394 (FGAG…PIVV), and 407–427 (VFMM…ILGE).

The protein belongs to the major facilitator superfamily. Sugar transporter (TC 2.A.1.1) family.

It localises to the cell inner membrane. Functions as a high-affinity transporter of niacin (nicotinamide or nicotinate). Probably substantially contributes to niacin transport when its concentration in the medium is very low. In Acinetobacter baylyi (strain ATCC 33305 / BD413 / ADP1), this protein is Niacin transporter NiaP.